A 235-amino-acid chain; its full sequence is Small ribosomal subunit protein eS4 (235 aa).

The S4 RNA-binding domain maps to isoleucine 43–glutamate 114.

This sequence belongs to the eukaryotic ribosomal protein eS4 family.

The protein is Small ribosomal subunit protein eS4 of Korarchaeum cryptofilum (strain OPF8).